The chain runs to 256 residues: Probable aquaporin TIP5-1 (256 aa).

The residue at position 1 (Met-1) is an N-acetylmethionine. The next 5 helical transmembrane spans lie at 24 to 44 (CYVS…GSVM), 57 to 77 (PFGV…SVYI), 89 to 109 (AVTF…MFYW), 144 to 164 (FGAS…VFTA), and 171 to 191 (LPLA…VLAA). The NPA 1 motif lies at 87–89 (NPA). An NPA 2 motif is present at residues 200 to 202 (NPA). Residues 222–242 (VGPLLGGATAALVYDNVVVPV) form a helical membrane-spanning segment. The residue at position 249 (Ser-249) is a Phosphoserine.

Belongs to the MIP/aquaporin (TC 1.A.8) family. TIP (TC 1.A.8.10) subfamily.

The protein resides in the membrane. Its function is as follows. Potential aquaporin, which may facilitate the transport of water and small neutral solutes across cell membranes. This chain is Probable aquaporin TIP5-1 (TIP5-1), found in Arabidopsis thaliana (Mouse-ear cress).